The following is a 71-amino-acid chain: Exodeoxyribonuclease 7 small subunit (71 aa).

This sequence belongs to the XseB family. In terms of assembly, heterooligomer composed of large and small subunits.

It localises to the cytoplasm. The catalysed reaction is Exonucleolytic cleavage in either 5'- to 3'- or 3'- to 5'-direction to yield nucleoside 5'-phosphates.. Bidirectionally degrades single-stranded DNA into large acid-insoluble oligonucleotides, which are then degraded further into small acid-soluble oligonucleotides. The chain is Exodeoxyribonuclease 7 small subunit from Streptococcus agalactiae serotype Ia (strain ATCC 27591 / A909 / CDC SS700).